The sequence spans 248 residues: DnaA regulatory inactivator Hda (248 aa).

This sequence belongs to the DnaA family. HdA subfamily. The active form seems to be an ADP-bound monomer. Forms the RIDA complex (regulatory inactivation of DnaA) of ATP-DnaA, ADP-Hda and the DNA-loaded beta sliding clamp (dnaN).

Functionally, mediates the interaction of DNA replication initiator protein DnaA with DNA polymerase subunit beta sliding clamp (dnaN). Stimulates hydrolysis of ATP-DnaA to ADP-DnaA, rendering DnaA inactive for reinitiation, a process called regulatory inhibition of DnaA or RIDA. The chain is DnaA regulatory inactivator Hda from Proteus mirabilis (strain HI4320).